The primary structure comprises 947 residues: Receptor-like protein 56 (947 aa).

The signal sequence occupies residues 1 to 27 (MEGKVFSGQKLILVMLLLGHLHGFSSC). Over 28 to 899 (IEKERKALLE…EDDKEVAIDM (872 aa)) the chain is Extracellular. Asn-60, Asn-75, and Asn-98 each carry an N-linked (GlcNAc...) asparagine glycan. LRR repeat units lie at residues 105–128 (FEEV…VEGY), 134–157 (LRNL…FLNA), 159–182 (TSLT…ELKN), 183–207 (LTNL…EFPY), 209–232 (KKLK…GLKN), 233–257 (LTNL…VFCE), 259–281 (KNLQ…CFGN), 282–305 (LNKL…SFSS), and 307–330 (ESLE…PLTN). N-linked (GlcNAc...) asparagine glycosylation is found at Asn-141, Asn-148, and Asn-182. Asn-232 is a glycosylation site (N-linked (GlcNAc...) asparagine). N-linked (GlcNAc...) asparagine glycosylation is present at Asn-330. The stretch at 332 to 356 (TKLKVFIFSSKDDMVQVKIESTWQP) is one LRR 10; degenerate repeat. LRR repeat units follow at residues 357–380 (LFQL…LMYQ), 381–404 (KNLH…LLEN), 405–427 (NPEL…PTSV), 428–450 (HNLQ…NFGR), 452–476 (LPNL…MGEM), 477–500 (YNIS…FVSS), 502–527 (FSLS…NFTS), 529–549 (IVLR…LLTL), 550–575 (VDLC…VFEY), 577–598 (NFLD…SLDN), 600–616 (LFLH…DTFL), 617–640 (GSIQ…VDTQ), 642–663 (ISFL…LCEF), 664–686 (SKMR…CFNN), 757–780 (LNSM…ELGD), 781–804 (LFKL…SFSK), 805–829 (LQDI…LTNL), and 831–854 (SLAI…QFNT). An N-linked (GlcNAc...) asparagine glycan is attached at Asn-415. N-linked (GlcNAc...) asparagine glycosylation is found at Asn-459, Asn-478, Asn-488, and Asn-524. A glycan (N-linked (GlcNAc...) asparagine) is linked at Asn-606. N-linked (GlcNAc...) asparagine glycosylation is present at Asn-686. Asn-788, Asn-828, Asn-836, and Asn-841 each carry an N-linked (GlcNAc...) asparagine glycan. The helical transmembrane segment at 900 to 920 (LVFYWSTAGTYVTALIGILVL) threads the bilayer. Topologically, residues 921–947 (MCVDCSWRRAWLRLVDAFIASAKSKLA) are cytoplasmic.

The protein belongs to the RLP family.

The protein localises to the cell membrane. In Arabidopsis thaliana (Mouse-ear cress), this protein is Receptor-like protein 56.